We begin with the raw amino-acid sequence, 270 residues long: Aliphatic sulfonates import ATP-binding protein SsuB 1 (270 aa).

Residues 18–232 form the ABC transporter domain; sequence VQLRNVVRQF…DSGQAGFQLI (215 aa). Position 50–57 (50–57) interacts with ATP; sequence GASGSGKT. The tract at residues 247–270 is disordered; the sequence is PDTAPQASAPDSTFSELRRVASAR. Polar residues predominate over residues 251–261; that stretch reads PQASAPDSTFS.

Belongs to the ABC transporter superfamily. Aliphatic sulfonates importer (TC 3.A.1.17.2) family. As to quaternary structure, the complex is composed of two ATP-binding proteins (SsuB), two transmembrane proteins (SsuC) and a solute-binding protein (SsuA).

The protein localises to the cell inner membrane. It catalyses the reaction ATP + H2O + aliphatic sulfonate-[sulfonate-binding protein]Side 1 = ADP + phosphate + aliphatic sulfonateSide 2 + [sulfonate-binding protein]Side 1.. In terms of biological role, part of the ABC transporter complex SsuABC involved in aliphatic sulfonates import. Responsible for energy coupling to the transport system. The protein is Aliphatic sulfonates import ATP-binding protein SsuB 1 of Pseudomonas syringae pv. tomato (strain ATCC BAA-871 / DC3000).